The chain runs to 729 residues: Phenylalanine ammonia-lyase (729 aa).

Tyr77 serves as the catalytic Proton donor/acceptor. Residues 182–184 (ASG) constitute a cross-link (5-imidazolinone (Ala-Gly)). Residue Ser183 is modified to 2,3-didehydroalanine (Ser). Residues Asn241, Gln336, Arg342, Asn372, Lys443, Glu471, and Asn474 each coordinate (E)-cinnamate.

It belongs to the PAL/histidase family. Post-translationally, contains an active site 4-methylidene-imidazol-5-one (MIO), which is formed autocatalytically by cyclization and dehydration of residues Ala-Ser-Gly.

The protein resides in the cytoplasm. It catalyses the reaction L-phenylalanine = (E)-cinnamate + NH4(+). The protein operates within secondary metabolite biosynthesis. Its pathway is phenylpropanoid metabolism; trans-cinnamate biosynthesis; trans-cinnamate from L-phenylalanine: step 1/1. Functionally, phenylalanine ammonia-lyase; part of the gene cluster that mediates the biosynthesis of squalestatin S1 (SQS1, also known as zaragozic acid A), a heavily oxidized fungal polyketide that offers potent cholesterol lowering activity by targeting squalene synthase (SS). SQS1 is composed of a 2,8-dioxobicyclic[3.2.1]octane-3,4,5-tricarboxyclic acid core that is connected to two lipophilic polyketide arms. These initial steps feature the priming of an unusual benzoic acid starter unit onto the highly reducing polyketide synthase pks2, followed by oxaloacetate extension and product release to generate a tricarboxylic acid containing product. The phenylalanine ammonia lyase (PAL) M7 and the acyl-CoA ligase M9 are involved in transforming phenylalanine into benzoyl-CoA. The citrate synthase-like protein R3 is involved in connecting the C-alpha-carbons of the hexaketide chain and oxaloacetate to afford the tricarboxylic acid unit. The potential hydrolytic enzymes, M8 and M10, are in close proximity to pks2 and may participate in product release. On the other side, the tetraketide arm is synthesized by a the squalestatin tetraketide synthase pks1 and enzymatically esterified to the core in the last biosynthetic step, by the acetyltransferase M4. The biosynthesis of the tetraketide must involve 3 rounds of chain extension. After the first and second rounds methyl-transfer occurs, and in all rounds of extension the ketoreductase and dehydratase are active. The enoyl reductase and C-MeT of pks1 are not active in the final round of extension. The acetyltransferase M4 appears to have a broad substrate selectivity for its acyl CoA substrate, allowing the in vitro synthesis of novel squalestatins. The biosynthesis of SQS1 requires several oxidative steps likely performed by oxidoreductases M1, R1 and R2. Finally, in support of the identification of the cluster as being responsible for SQS1 production, the cluster contains a gene encoding a putative squalene synthase (SS) R6, suggesting a likely mechanism for self-resistance. The chain is Phenylalanine ammonia-lyase from Phoma sp. (strain ATCC 20986 / MF5453).